Reading from the N-terminus, the 378-residue chain is MARDYYGILGVDRNATDSEIKKAYRKLARKYHPDVNPSEEAAEKFREASVAHEVLTDPDKRRIVDMGGDPMEQGGGAGHPGGFGSGGLGDIFDAFFGGGAGSRGPRSRVQPGSDTLWRTSITLEEAFTGVKKDLTLDTAVLCSKCHGSGSASNAKPKTCGTCHGSGEIQEVQRSFLGNVMTSRPCHTCNGTGEVIPDPCDECAGDGRVRARRDIVADIPAGIQSGMRIRMAGQGEVGAGGGPAGDLYVEVMVRPHAVFTRDGDDLHASIRVPMIDAALGSELEVESLTGEEITVVIPAGTQPNQVITLEGEGMPRLRAEGRGDLMAHVDLFVPTEIDDRTRELLEQIRDYRRDNSSVHREGEEHGGLFDKLKSKFRNR.

A J domain is found at 4-68; the sequence is DYYGILGVDR…DKRRIVDMGG (65 aa). The CR-type zinc-finger motif lies at 129–211; sequence GVKKDLTLDT…CAGDGRVRAR (83 aa). 8 residues coordinate Zn(2+): cysteine 142, cysteine 145, cysteine 159, cysteine 162, cysteine 185, cysteine 188, cysteine 199, and cysteine 202. CXXCXGXG motif repeat units follow at residues 142–149, 159–166, 185–192, and 199–206; these read CSKCHGSG, CGTCHGSG, CHTCNGTG, and CDECAGDG.

This sequence belongs to the DnaJ family. In terms of assembly, homodimer. Zn(2+) is required as a cofactor.

The protein resides in the cytoplasm. In terms of biological role, participates actively in the response to hyperosmotic and heat shock by preventing the aggregation of stress-denatured proteins and by disaggregating proteins, also in an autonomous, DnaK-independent fashion. Unfolded proteins bind initially to DnaJ; upon interaction with the DnaJ-bound protein, DnaK hydrolyzes its bound ATP, resulting in the formation of a stable complex. GrpE releases ADP from DnaK; ATP binding to DnaK triggers the release of the substrate protein, thus completing the reaction cycle. Several rounds of ATP-dependent interactions between DnaJ, DnaK and GrpE are required for fully efficient folding. Also involved, together with DnaK and GrpE, in the DNA replication of plasmids through activation of initiation proteins. In Corynebacterium efficiens (strain DSM 44549 / YS-314 / AJ 12310 / JCM 11189 / NBRC 100395), this protein is Chaperone protein DnaJ 1.